The chain runs to 491 residues: Glutamate--tRNA ligase (491 aa).

Residues 13–23 carry the 'HIGH' region motif; that stretch reads PSPTGFLHIGN. Zn(2+)-binding residues include Cys110, Cys112, Cys137, and His139. The 'KMSKS' region motif lies at 254 to 258; the sequence is KLSKR. Lys257 is an ATP binding site.

Belongs to the class-I aminoacyl-tRNA synthetase family. Glutamate--tRNA ligase type 1 subfamily. As to quaternary structure, monomer. The cofactor is Zn(2+).

Its subcellular location is the cytoplasm. The enzyme catalyses tRNA(Glu) + L-glutamate + ATP = L-glutamyl-tRNA(Glu) + AMP + diphosphate. Catalyzes the attachment of glutamate to tRNA(Glu) in a two-step reaction: glutamate is first activated by ATP to form Glu-AMP and then transferred to the acceptor end of tRNA(Glu). This Listeria monocytogenes serovar 1/2a (strain ATCC BAA-679 / EGD-e) protein is Glutamate--tRNA ligase.